A 307-amino-acid chain; its full sequence is Ribosomal RNA small subunit methyltransferase H (307 aa).

S-adenosyl-L-methionine-binding positions include 34–36, Asp54, Phe79, Asp101, and Gln108; that span reads GGH.

It belongs to the methyltransferase superfamily. RsmH family.

It is found in the cytoplasm. It carries out the reaction cytidine(1402) in 16S rRNA + S-adenosyl-L-methionine = N(4)-methylcytidine(1402) in 16S rRNA + S-adenosyl-L-homocysteine + H(+). In terms of biological role, specifically methylates the N4 position of cytidine in position 1402 (C1402) of 16S rRNA. The protein is Ribosomal RNA small subunit methyltransferase H of Vesicomyosocius okutanii subsp. Calyptogena okutanii (strain HA).